Here is a 415-residue protein sequence, read N- to C-terminus: Histidine--tRNA ligase (415 aa).

This sequence belongs to the class-II aminoacyl-tRNA synthetase family. As to quaternary structure, homodimer.

It is found in the cytoplasm. It carries out the reaction tRNA(His) + L-histidine + ATP = L-histidyl-tRNA(His) + AMP + diphosphate + H(+). The chain is Histidine--tRNA ligase from Rickettsia akari (strain Hartford).